A 252-amino-acid polypeptide reads, in one-letter code: 2-succinyl-6-hydroxy-2,4-cyclohexadiene-1-carboxylate synthase (252 aa).

It belongs to the AB hydrolase superfamily. MenH family. In terms of assembly, monomer.

The catalysed reaction is 5-enolpyruvoyl-6-hydroxy-2-succinyl-cyclohex-3-ene-1-carboxylate = (1R,6R)-6-hydroxy-2-succinyl-cyclohexa-2,4-diene-1-carboxylate + pyruvate. The protein operates within quinol/quinone metabolism; 1,4-dihydroxy-2-naphthoate biosynthesis; 1,4-dihydroxy-2-naphthoate from chorismate: step 3/7. It functions in the pathway quinol/quinone metabolism; menaquinone biosynthesis. Catalyzes a proton abstraction reaction that results in 2,5-elimination of pyruvate from 2-succinyl-5-enolpyruvyl-6-hydroxy-3-cyclohexene-1-carboxylate (SEPHCHC) and the formation of 2-succinyl-6-hydroxy-2,4-cyclohexadiene-1-carboxylate (SHCHC). The sequence is that of 2-succinyl-6-hydroxy-2,4-cyclohexadiene-1-carboxylate synthase from Escherichia coli O157:H7.